Reading from the N-terminus, the 96-residue chain is C-C motif chemokine 20 (96 aa).

The first 26 residues, 1-26 (MACKHLPFLALAGVLLAYLCSQSEAA), serve as a signal peptide directing secretion. Disulfide bonds link C31/C58 and C32/C74.

Belongs to the intercrine beta (chemokine CC) family. In terms of tissue distribution, low levels in thymus and lung.

Its subcellular location is the secreted. Its function is as follows. Acts as a ligand for C-C chemokine receptor CCR6. Signals through binding and activation of CCR6 and induces a strong chemotactic response and mobilization of intracellular calcium ions. The ligand-receptor pair CCL20-CCR6 is responsible for the chemotaxis of dendritic cells (DC), effector/memory T-cells and B-cells and plays an important role at skin and mucosal surfaces under homeostatic and inflammatory conditions, as well as in pathology, including cancer and autoimmune diseases. CCL20 acts as a chemotactic factor that attracts lymphocytes and, slightly, neutrophils, but not monocytes. Involved in the recruitment of both the pro-inflammatory IL17 producing helper T-cells (Th17) and the regulatory T-cells (Treg) to sites of inflammation. Required for optimal migration of thymic natural regulatory T cells (nTregs) and DN1 early thymocyte progenitor cells. Positively regulates sperm motility and chemotaxis via its binding to CCR6 which triggers Ca2+ mobilization in the sperm which is important for its motility. May be involved in formation and function of the mucosal lymphoid tissues by attracting lymphocytes and dendritic cells towards epithelial cells. The protein is C-C motif chemokine 20 (Ccl20) of Rattus norvegicus (Rat).